Consider the following 565-residue polypeptide: MPASDSAEWELPRLRTSFIFQDDYKYLGDDGSVSQDLAEFFDVKFYPYSPPGAPPVFAATSKKHAVICRLTQTTDKDANPCEIIQLIRDDGNEANCASCWSKDPITDQPLLCIAGNEGNVKVYNVTEGKLYRTLVGHGGGINDLATSPANPYIIASASDDTTIRIWSLAPEHEKQPCVCILGGEGHSYDLLSVAFHDNGRYVLSAGHDQVINLWALPEFPNEHMEIPIVIYYPHFSSSEIHNNLVDCVAFYGDLILSRACHEDTIVLWRIEGFSSDDPIPGPLDAPTPTDMTKQTRSYFTPTVSPQSRPAMFTRLAQFHTPDCGVQFFMRFRMYHVPGKHPILAFANAKSKTFFWDLARFGEYARFMADLKEAQQSYNGRVVVVDQGQGISLAQAQQVHGPGVGVVMKPAWLVPKRVKKAPGAAGSGSGTAANGGHNNNNNNNNNNNNNNHETGSQRSFSATNNLSNSGRDKESASMVSASPDPDSPFGFSRETLQAWADMYDLSNPVGLIKAHRSLAIDGAFVGRQVGWSPEGEWCVVVGNGNRALIYQRWGKERGLGSGTPGA.

WD repeat units lie at residues 89–133 (DDGN…LYRT), 136–176 (GHGG…EKQP), 185–224 (GHSYDLLSVAFHDNGRYVLSAGHDQVINLWALPEFPNEHM), and 240–278 (IHNNLVDCVAFYGDLILSRACHEDTIVLWRIEGFSSDDP). Positions 417–488 (VKKAPGAAGS…SASPDPDSPF (72 aa)) are disordered. Low complexity predominate over residues 429–450 (GTAANGGHNNNNNNNNNNNNNN). A compositionally biased stretch (polar residues) spans 451–468 (HETGSQRSFSATNNLSNS). The WD 5 repeat unit spans residues 519 to 559 (IDGAFVGRQVGWSPEGEWCVVVGNGNRALIYQRWGKERGLG).

This sequence belongs to the WD repeat ESC family. In terms of assembly, component of the polycomb repressive complex 2 (PRC2) that consists of four core subunits icluding EZH2, EED, SUZ12, and RBBP4, among which EZH2 is the catalytic subunit and which minimally requires EED and SUZ12 for catalysis.

The protein localises to the nucleus. Its function is as follows. Component of the of the Polycomb Repressive Complex 2 (PRC2), a histone H3 lysine methyltransferase responsible for generating mono-, di-, and tri-methylation on Lys27 (H3K27me1, H3K27me2 and H3K27me3). The tri-methylated form is known to be critical in gene repression, and its proper placement is essential in defining repression patterns during development. EED is not a catalytic subunit but is required for the complex regulation of histone H3 lysine methylation by EZH2. This chain is Polycomb protein EED, found in Chaetomium thermophilum (strain DSM 1495 / CBS 144.50 / IMI 039719) (Thermochaetoides thermophila).